The sequence spans 233 residues: MIDHKVHLSEAFFGRRKGKRLRNSQLARIKMLLPTLKIDLNNSAPPDLTSLFPSKVREVRLEIGFGGGEHLLHEMEHFPQTGFIGVEPFINGMAKMLMSLEQHKQHQNHLRLYDDDATRLLDWLPNASLDGIDLLYPDPWPKKKHWKRRFINMKNLNRVARVLKIGKKFRFATDIDSYANWTLYYFTHHHSFEWEAENLKDWKTPYPLWPGTRYEEKALREGRTPTYLTFIKK.

S-adenosyl-L-methionine contacts are provided by E62, E87, D116, and D138. D138 is an active-site residue. Residues K142, D174, and 212-215 (TRYE) contribute to the substrate site.

The protein belongs to the class I-like SAM-binding methyltransferase superfamily. TrmB family.

It carries out the reaction guanosine(46) in tRNA + S-adenosyl-L-methionine = N(7)-methylguanosine(46) in tRNA + S-adenosyl-L-homocysteine. It participates in tRNA modification; N(7)-methylguanine-tRNA biosynthesis. Its function is as follows. Catalyzes the formation of N(7)-methylguanine at position 46 (m7G46) in tRNA. The sequence is that of tRNA (guanine-N(7)-)-methyltransferase from Bartonella quintana (strain Toulouse) (Rochalimaea quintana).